A 79-amino-acid polypeptide reads, in one-letter code: Protein RALF-like 35 (79 aa).

Positions 1 to 29 (MAAHKMSLTSLFFVSIVIVLSLFSGFGEG) are cleaved as a signal peptide. 2 disulfides stabilise this stretch: C45-C52 and C66-C72. A glycan (N-linked (GlcNAc...) asparagine) is linked at N68.

This sequence belongs to the plant rapid alkalinization factor (RALF) family.

It localises to the secreted. Cell signaling peptide that may regulate plant stress, growth, and development. Mediates a rapid alkalinization of extracellular space by mediating a transient increase in the cytoplasmic Ca(2+) concentration leading to a calcium-dependent signaling events through a cell surface receptor and a concomitant activation of some intracellular mitogen-activated protein kinases. In Arabidopsis thaliana (Mouse-ear cress), this protein is Protein RALF-like 35.